Consider the following 275-residue polypeptide: Large ribosomal subunit protein uL2 (275 aa).

A disordered region spans residues 223–275 (AAMNANDHPHGGGEAKAGQGNPHPVTPWGVPTKGYKTRKNKRTQQFIVRDRRG).

It belongs to the universal ribosomal protein uL2 family. Part of the 50S ribosomal subunit. Forms a bridge to the 30S subunit in the 70S ribosome.

One of the primary rRNA binding proteins. Required for association of the 30S and 50S subunits to form the 70S ribosome, for tRNA binding and peptide bond formation. It has been suggested to have peptidyltransferase activity; this is somewhat controversial. Makes several contacts with the 16S rRNA in the 70S ribosome. This is Large ribosomal subunit protein uL2 from Xanthomonas campestris pv. campestris (strain 8004).